Reading from the N-terminus, the 253-residue chain is Triosephosphate isomerase (253 aa).

9 to 11 (NWK) contacts substrate. Catalysis depends on His94, which acts as the Electrophile. Glu163 (proton acceptor) is an active-site residue. Residues Gly169, Ser209, and 230-231 (GG) each bind substrate.

The protein belongs to the triosephosphate isomerase family. As to quaternary structure, homodimer.

The protein resides in the cytoplasm. It catalyses the reaction D-glyceraldehyde 3-phosphate = dihydroxyacetone phosphate. The protein operates within carbohydrate biosynthesis; gluconeogenesis. Its pathway is carbohydrate degradation; glycolysis; D-glyceraldehyde 3-phosphate from glycerone phosphate: step 1/1. Involved in the gluconeogenesis. Catalyzes stereospecifically the conversion of dihydroxyacetone phosphate (DHAP) to D-glyceraldehyde-3-phosphate (G3P). The protein is Triosephosphate isomerase of Dehalococcoides mccartyi (strain CBDB1).